Here is a 273-residue protein sequence, read N- to C-terminus: 4-hydroxy-tetrahydrodipicolinate reductase (273 aa).

Residues 12–17 (GAGGRM) and E38 each bind NAD(+). R39 serves as a coordination point for NADP(+). NAD(+)-binding positions include 102 to 104 (GTT) and 126 to 129 (AANF). H159 acts as the Proton donor/acceptor in catalysis. Residue H160 coordinates (S)-2,3,4,5-tetrahydrodipicolinate. K163 functions as the Proton donor in the catalytic mechanism. Residue 169-170 (GT) coordinates (S)-2,3,4,5-tetrahydrodipicolinate.

This sequence belongs to the DapB family. Homotetramer.

It localises to the cytoplasm. It catalyses the reaction (S)-2,3,4,5-tetrahydrodipicolinate + NAD(+) + H2O = (2S,4S)-4-hydroxy-2,3,4,5-tetrahydrodipicolinate + NADH + H(+). The enzyme catalyses (S)-2,3,4,5-tetrahydrodipicolinate + NADP(+) + H2O = (2S,4S)-4-hydroxy-2,3,4,5-tetrahydrodipicolinate + NADPH + H(+). Its pathway is amino-acid biosynthesis; L-lysine biosynthesis via DAP pathway; (S)-tetrahydrodipicolinate from L-aspartate: step 4/4. Its function is as follows. Catalyzes the conversion of 4-hydroxy-tetrahydrodipicolinate (HTPA) to tetrahydrodipicolinate. The sequence is that of 4-hydroxy-tetrahydrodipicolinate reductase from Klebsiella pneumoniae subsp. pneumoniae (strain ATCC 700721 / MGH 78578).